Consider the following 632-residue polypeptide: Myrcene synthase TPS3FN, chloroplastic (632 aa).

A chloroplast-targeting transit peptide spans 1 to 55 (MHCMAVHQFSPSIVSSLPTISTYNNNHFCRFFTPKTSISPISKTKSKSSTCYPIQ). Arg-343, Asp-380, Asp-384, Arg-524, and Asp-527 together coordinate (2E)-geranyl diphosphate. 2 residues coordinate Mg(2+): Asp-380 and Asp-384. A DDXXD motif motif is present at residues 380 to 384 (DDIYD). 3 residues coordinate Mg(2+): Asp-527, Thr-531, and Glu-535.

The protein belongs to the terpene synthase family. Tpsb subfamily. Mg(2+) serves as cofactor. It depends on Mn(2+) as a cofactor. In terms of tissue distribution, expressed in glandular trichomes two to four weeks after flowering onset.

Its subcellular location is the plastid. The protein localises to the chloroplast. It carries out the reaction (2E)-geranyl diphosphate = beta-myrcene + diphosphate. Its pathway is secondary metabolite biosynthesis; terpenoid biosynthesis. Functionally, involved in monoterpene (C10) olefins biosynthesis, constituants of cannabinoids and terpenoids-rich resins. Catalyzes strictly the conversion of (2E)-geranyl diphosphate to beta-myrcene. The chain is Myrcene synthase TPS3FN, chloroplastic from Cannabis sativa (Hemp).